Here is a 387-residue protein sequence, read N- to C-terminus: Phosphoglycerate kinase (387 aa).

Residues Asp21 to Asn23, Arg36, His59 to Arg62, Arg113, and Arg146 each bind substrate. ATP contacts are provided by residues Lys197, Glu314, and Gly340–Thr343.

It belongs to the phosphoglycerate kinase family. As to quaternary structure, monomer.

The protein localises to the cytoplasm. The enzyme catalyses (2R)-3-phosphoglycerate + ATP = (2R)-3-phospho-glyceroyl phosphate + ADP. It functions in the pathway carbohydrate degradation; glycolysis; pyruvate from D-glyceraldehyde 3-phosphate: step 2/5. This Photorhabdus luminescens (Xenorhabdus luminescens) protein is Phosphoglycerate kinase.